The following is a 75-amino-acid chain: Small ribosomal subunit protein bS18 (75 aa).

The protein belongs to the bacterial ribosomal protein bS18 family. Part of the 30S ribosomal subunit. Forms a tight heterodimer with protein bS6.

In terms of biological role, binds as a heterodimer with protein bS6 to the central domain of the 16S rRNA, where it helps stabilize the platform of the 30S subunit. In Shewanella loihica (strain ATCC BAA-1088 / PV-4), this protein is Small ribosomal subunit protein bS18.